Reading from the N-terminus, the 183-residue chain is Regulatory protein RecX (183 aa).

Residues 1–12 show a composition bias toward polar residues; the sequence is MTSFPHPSTSES. A disordered region spans residues 1–26; sequence MTSFPHPSTSESGPDPDSEPNREEQA.

Belongs to the RecX family.

Its subcellular location is the cytoplasm. In terms of biological role, modulates RecA activity. This chain is Regulatory protein RecX, found in Mycobacterium sp. (strain KMS).